A 206-amino-acid polypeptide reads, in one-letter code: Small ribosomal subunit protein uS4 (206 aa).

In terms of domain architecture, S4 RNA-binding spans 96-156 (CRLDNVVYRM…EKSLGQLRIV (61 aa)).

Belongs to the universal ribosomal protein uS4 family. As to quaternary structure, part of the 30S ribosomal subunit. Contacts protein S5. The interaction surface between S4 and S5 is involved in control of translational fidelity.

In terms of biological role, one of the primary rRNA binding proteins, it binds directly to 16S rRNA where it nucleates assembly of the body of the 30S subunit. With S5 and S12 plays an important role in translational accuracy. The protein is Small ribosomal subunit protein uS4 of Pseudomonas putida (strain ATCC 47054 / DSM 6125 / CFBP 8728 / NCIMB 11950 / KT2440).